The sequence spans 271 residues: Magnesium dechelatase SGR2, chloroplastic (271 aa).

The N-terminal 54 residues, 1-54 (MCSLATNLLLPSKMKPVFPEKLSTSSLCVTTRRSKMKNRSIVPVARLFGPAIFE), are a transit peptide targeting the chloroplast.

Belongs to the staygreen family. Interacts with the light harvesting complex II (LHCII). Interacts with the chlorophyll catabolic enzyme (CCE) RCCR.

The protein resides in the plastid. It is found in the chloroplast thylakoid membrane. The enzyme catalyses chlorophyll a + 2 H(+) = pheophytin a + Mg(2+). Magnesium chelatase involved in chlorophyll a degradation in the chlorophyll-protein complexes of photosystem I (PSI) and photosystem II (PSII). Contributes to the degradation of PSI and PSII in the thylakoid membranes. Required to trigger chlorophyll degradation during natural and dark-induced leaf senescence. Mediates chlorophyll degradation during embryo degreening. Recombinant SGR2 possesses high dechelating activity against chlorophyll a, very low activity against chlorophyllide a, and no activity against chlorophyll b. The chain is Magnesium dechelatase SGR2, chloroplastic from Arabidopsis thaliana (Mouse-ear cress).